The sequence spans 156 residues: Small ribosomal subunit protein uS7c (156 aa).

This sequence belongs to the universal ribosomal protein uS7 family. In terms of assembly, part of the 30S ribosomal subunit.

It localises to the plastid. In terms of biological role, one of the primary rRNA binding proteins, it binds directly to 16S rRNA where it nucleates assembly of the head domain of the 30S subunit. In Prototheca wickerhamii, this protein is Small ribosomal subunit protein uS7c (rps7).